The chain runs to 345 residues: SLAM family member 5 (345 aa).

The first 21 residues, Met1 to Gly21, serve as a signal peptide directing secretion. Residues Lys22–Gly225 lie on the Extracellular side of the membrane. The Ig-like V-type domain occupies Ile26–Tyr129. The Ig-like C2-type domain occupies Pro135–Ser207. N-linked (GlcNAc...) asparagine glycosylation occurs at Asn150. A disulfide bond links Cys155 and Cys193. The helical transmembrane segment at Leu226 to Phe246 threads the bilayer. Topologically, residues Arg247 to Ile345 are cytoplasmic. The ITSM 1 motif lies at Thr277–Ile282. The residue at position 279 (Tyr279) is a Phosphotyrosine. A Phosphotyrosine; by LYN modification is found at Tyr296. Positions Thr314–Val319 match the ITSM 2 motif. Tyr316 is subject to Phosphotyrosine. A disordered region spans residues Gly326 to Ile345. Residues Ala328–Ile345 are compositionally biased toward polar residues. Residue Tyr341 is modified to Phosphotyrosine; by FES.

As to quaternary structure, homodimer; via its extracellular domain. Forms a head to tail dimer with a CD48 molecule from another cell. Interacts with SH2 domain-containing proteins SH2D1A/SAP and SH2D1B/EAT-2. Interacts with tyrosine-protein phosphatases PTPN6/SHP-1 and PTPN11//SHP-2 via its phosphorylated cytoplasmic domain, and this interaction is blocked by SH2D1A. Interacts (via phosphorylated ITSM 1 and 2) with INPP5D/SHIP1. In terms of processing, phosphorylated by tyrosine-protein kinase LCK on tyrosine residues following ligation induced by agonist monoclonal antibody. The association with SH2D1A is dependent of tyrosine phosphorylation of its cytoplasmic domain. Phosphorylated on Tyr-296 and Tyr-316 following platelet aggregation. Phosphorylated on tyrosine residues upon high affinity immunoglobulin epsilon receptor aggregation in mast cells. N-glycosylated. As to expression, predominantly expressed in hematopoietic tissues, such as lymph node, spleen and peripheral leukocytes. Expressed in macrophages, B-cells, monocytes, platelets, thymocytes, T-cells and dendritic cells. Highly expressed in memory T-cells. Expressed in mast cells.

It is found in the cell membrane. Self-ligand receptor of the signaling lymphocytic activation molecule (SLAM) family. SLAM receptors triggered by homo- or heterotypic cell-cell interactions are modulating the activation and differentiation of a wide variety of immune cells and thus are involved in the regulation and interconnection of both innate and adaptive immune response. Activities are controlled by presence or absence of small cytoplasmic adapter proteins, SH2D1A/SAP and/or SH2D1B/EAT-2. Can mediate natural killer (NK) cell cytotoxicity dependent on SH2D1A and SH2D1B. Increases proliferative responses of activated T-cells and SH2D1A/SAP does not seem be required for this process. Homophilic interactions enhance interferon gamma/IFNG secretion in lymphocytes and induce platelet stimulation via a SH2D1A-dependent pathway. May serve as a marker for hematopoietic progenitor cells Required for a prolonged T-cell:B-cell contact, optimal T follicular helper function, and germinal center formation. In germinal centers involved in maintaining B-cell tolerance and in preventing autoimmunity. In mast cells negatively regulates high affinity immunoglobulin epsilon receptor signaling; independent of SH2D1A and SH2D1B but implicating FES and PTPN6/SHP-1. In macrophages enhances LPS-induced MAPK phosphorylation and NF-kappaB activation and modulates LPS-induced cytokine secretion; involving ITSM 2. Positively regulates macroautophagy in primary dendritic cells via stabilization of IRF8; inhibits TRIM21-mediated proteasomal degradation of IRF8. The polypeptide is SLAM family member 5 (CD84) (Homo sapiens (Human)).